The sequence spans 311 residues: Coproporphyrin III ferrochelatase 1 (311 aa).

Fe-coproporphyrin III-binding positions include Tyr-12, Arg-29, 45-46 (RY), Ser-53, and Tyr-124. His-182 and Glu-263 together coordinate Fe(2+).

Belongs to the ferrochelatase family.

The protein localises to the cytoplasm. The catalysed reaction is Fe-coproporphyrin III + 2 H(+) = coproporphyrin III + Fe(2+). It functions in the pathway porphyrin-containing compound metabolism; protoheme biosynthesis. Functionally, involved in coproporphyrin-dependent heme b biosynthesis. Catalyzes the insertion of ferrous iron into coproporphyrin III to form Fe-coproporphyrin III. The polypeptide is Coproporphyrin III ferrochelatase 1 (Bacillus thuringiensis subsp. konkukian (strain 97-27)).